A 672-amino-acid polypeptide reads, in one-letter code: tRNA 5-methylaminomethyl-2-thiouridine biosynthesis bifunctional protein MnmC (672 aa).

A tRNA (mnm(5)s(2)U34)-methyltransferase region spans residues 1 to 243 (MTSIKNAELG…KREMIAGSME (243 aa)). Residues 269–672 (IGGGIASAAL…LRKGKAITEL (404 aa)) form an FAD-dependent cmnm(5)s(2)U34 oxidoreductase region.

The protein in the N-terminal section; belongs to the methyltransferase superfamily. tRNA (mnm(5)s(2)U34)-methyltransferase family. It in the C-terminal section; belongs to the DAO family. The cofactor is FAD.

It is found in the cytoplasm. It catalyses the reaction 5-aminomethyl-2-thiouridine(34) in tRNA + S-adenosyl-L-methionine = 5-methylaminomethyl-2-thiouridine(34) in tRNA + S-adenosyl-L-homocysteine + H(+). In terms of biological role, catalyzes the last two steps in the biosynthesis of 5-methylaminomethyl-2-thiouridine (mnm(5)s(2)U) at the wobble position (U34) in tRNA. Catalyzes the FAD-dependent demodification of cmnm(5)s(2)U34 to nm(5)s(2)U34, followed by the transfer of a methyl group from S-adenosyl-L-methionine to nm(5)s(2)U34, to form mnm(5)s(2)U34. In Vibrio campbellii (strain ATCC BAA-1116), this protein is tRNA 5-methylaminomethyl-2-thiouridine biosynthesis bifunctional protein MnmC.